The primary structure comprises 325 residues: Germination protease (325 aa).

Residues 1–7 (MYNVRTD) constitute a propeptide that is removed on maturation.

This sequence belongs to the peptidase A25 family. Homotetramer. Post-translationally, autoproteolytically processed. The inactive tetrameric zymogen termed p46 autoprocesses to a smaller form termed p41, which is active only during spore germination.

The catalysed reaction is Endopeptidase action with P4 Glu or Asp, P1 preferably Glu &gt; Asp, P1' hydrophobic and P2' Ala.. In terms of biological role, initiates the rapid degradation of small, acid-soluble proteins during spore germination. The polypeptide is Germination protease (Clostridium perfringens (strain SM101 / Type A)).